A 608-amino-acid chain; its full sequence is UvrABC system protein C (608 aa).

The GIY-YIG domain maps to 16-94 (NRPGVYRMFD…IKEWRPPYNI (79 aa)). The 36-residue stretch at 204–239 (NALADELNVGMEQAAMRLDFEKAAELRDQVAILRRV) folds into the UVR domain.

The protein belongs to the UvrC family. As to quaternary structure, interacts with UvrB in an incision complex.

The protein resides in the cytoplasm. Its function is as follows. The UvrABC repair system catalyzes the recognition and processing of DNA lesions. UvrC both incises the 5' and 3' sides of the lesion. The N-terminal half is responsible for the 3' incision and the C-terminal half is responsible for the 5' incision. In Pseudomonas aeruginosa (strain LESB58), this protein is UvrABC system protein C.